A 538-amino-acid chain; its full sequence is Putative cysteine ligase BshC (538 aa).

Residues 460–484 (KINEQIELLERMLKRNVEKKHEVEL) adopt a coiled-coil conformation.

The protein belongs to the BshC family.

Its function is as follows. Involved in bacillithiol (BSH) biosynthesis. May catalyze the last step of the pathway, the addition of cysteine to glucosamine malate (GlcN-Mal) to generate BSH. This Bacillus cereus (strain ATCC 10987 / NRS 248) protein is Putative cysteine ligase BshC.